The chain runs to 445 residues: Phosphoglucosamine mutase (445 aa).

Serine 99 acts as the Phosphoserine intermediate in catalysis. Serine 99, aspartate 242, aspartate 244, and aspartate 246 together coordinate Mg(2+). Serine 99 is subject to Phosphoserine.

The protein belongs to the phosphohexose mutase family. Mg(2+) serves as cofactor. In terms of processing, activated by phosphorylation.

It carries out the reaction alpha-D-glucosamine 1-phosphate = D-glucosamine 6-phosphate. Catalyzes the conversion of glucosamine-6-phosphate to glucosamine-1-phosphate. The polypeptide is Phosphoglucosamine mutase (Helicobacter acinonychis (strain Sheeba)).